A 564-amino-acid polypeptide reads, in one-letter code: Nucleoprotein (564 aa).

Residues 54–236 (LRKNKRGEED…VTKDESSINI (183 aa)) are binding site for the cap structure m7GTP. Residues aspartate 380 and glutamate 382 each coordinate Mn(2+). Residues glutamate 390, cysteine 497, histidine 500, and cysteine 525 each coordinate Zn(2+). Residue aspartate 529 coordinates Mn(2+).

This sequence belongs to the arenaviridae nucleocapsid protein family. In terms of assembly, homomultimerizes to form the nucleocapsid. Binds to viral genomic RNA. Interacts with glycoprotein G2. Interacts with protein Z; this interaction probably directs the encapsidated genome to budding sites. Interacts with protein L; this interaction does not interfere with Z-L interaction. Interacts with host IKBKE (via Protein kinase domain); the interaction inhibits IKBKE kinase activity.

Its subcellular location is the virion. The protein resides in the host cytoplasm. Functionally, encapsidates the genome, protecting it from nucleases. The encapsidated genomic RNA is termed the nucleocapsid (NC). Serves as template for viral transcription and replication. The increased presence of protein N in host cell does not seem to trigger the switch from transcription to replication as observed in other negative strain RNA viruses. Through the interaction with host IKBKE, strongly inhibits the phosphorylation and nuclear translocation of host IRF3, a protein involved in interferon activation pathway, leading to the inhibition of interferon-beta and IRF3-dependent promoters activation. Also encodes a functional 3'-5' exoribonuclease that degrades preferentially dsRNA substrates and thereby participates in the suppression of interferon induction. The protein is Nucleoprotein of Calomys callosus (Large vesper mouse).